We begin with the raw amino-acid sequence, 219 residues long: Endonuclease III (219 aa).

The 20-residue stretch at 109–128 folds into the HhH domain; sequence RDELVKLPGVGRKTANVVVS. Residues cysteine 189, cysteine 196, cysteine 199, and cysteine 205 each coordinate [4Fe-4S] cluster.

It belongs to the Nth/MutY family. [4Fe-4S] cluster is required as a cofactor.

The catalysed reaction is 2'-deoxyribonucleotide-(2'-deoxyribose 5'-phosphate)-2'-deoxyribonucleotide-DNA = a 3'-end 2'-deoxyribonucleotide-(2,3-dehydro-2,3-deoxyribose 5'-phosphate)-DNA + a 5'-end 5'-phospho-2'-deoxyribonucleoside-DNA + H(+). Its function is as follows. DNA repair enzyme that has both DNA N-glycosylase activity and AP-lyase activity. The DNA N-glycosylase activity releases various damaged pyrimidines from DNA by cleaving the N-glycosidic bond, leaving an AP (apurinic/apyrimidinic) site. The AP-lyase activity cleaves the phosphodiester bond 3' to the AP site by a beta-elimination, leaving a 3'-terminal unsaturated sugar and a product with a terminal 5'-phosphate. This Bacillus subtilis (strain 168) protein is Endonuclease III.